The primary structure comprises 253 residues: tRNA (guanine-N(1)-)-methyltransferase (253 aa).

S-adenosyl-L-methionine-binding positions include glycine 116 and 136–141 (VGDYIL).

The protein belongs to the RNA methyltransferase TrmD family. Homodimer.

It is found in the cytoplasm. The enzyme catalyses guanosine(37) in tRNA + S-adenosyl-L-methionine = N(1)-methylguanosine(37) in tRNA + S-adenosyl-L-homocysteine + H(+). Functionally, specifically methylates guanosine-37 in various tRNAs. The polypeptide is tRNA (guanine-N(1)-)-methyltransferase (Colwellia psychrerythraea (strain 34H / ATCC BAA-681) (Vibrio psychroerythus)).